A 147-amino-acid polypeptide reads, in one-letter code: Nucleoside diphosphate kinase (147 aa).

ATP contacts are provided by K9, F57, R85, T91, R102, and N112. Residue H115 is the Pros-phosphohistidine intermediate of the active site.

The protein belongs to the NDK family. Homotetramer. Mg(2+) serves as cofactor.

The protein resides in the cytoplasm. It carries out the reaction a 2'-deoxyribonucleoside 5'-diphosphate + ATP = a 2'-deoxyribonucleoside 5'-triphosphate + ADP. The enzyme catalyses a ribonucleoside 5'-diphosphate + ATP = a ribonucleoside 5'-triphosphate + ADP. Its function is as follows. Major role in the synthesis of nucleoside triphosphates other than ATP. The ATP gamma phosphate is transferred to the NDP beta phosphate via a ping-pong mechanism, using a phosphorylated active-site intermediate. The polypeptide is Nucleoside diphosphate kinase (Listeria innocua serovar 6a (strain ATCC BAA-680 / CLIP 11262)).